The sequence spans 359 residues: Peptide chain release factor 1 (359 aa).

The residue at position 233 (Q233) is an N5-methylglutamine.

This sequence belongs to the prokaryotic/mitochondrial release factor family. In terms of processing, methylated by PrmC. Methylation increases the termination efficiency of RF1.

The protein resides in the cytoplasm. Peptide chain release factor 1 directs the termination of translation in response to the peptide chain termination codons UAG and UAA. The polypeptide is Peptide chain release factor 1 (Ruminiclostridium cellulolyticum (strain ATCC 35319 / DSM 5812 / JCM 6584 / H10) (Clostridium cellulolyticum)).